We begin with the raw amino-acid sequence, 352 residues long: Histidinol-phosphate aminotransferase 1 (352 aa).

K211 bears the N6-(pyridoxal phosphate)lysine mark.

The protein belongs to the class-II pyridoxal-phosphate-dependent aminotransferase family. Histidinol-phosphate aminotransferase subfamily. As to quaternary structure, homodimer. Requires pyridoxal 5'-phosphate as cofactor.

It catalyses the reaction L-histidinol phosphate + 2-oxoglutarate = 3-(imidazol-4-yl)-2-oxopropyl phosphate + L-glutamate. The protein operates within amino-acid biosynthesis; L-histidine biosynthesis; L-histidine from 5-phospho-alpha-D-ribose 1-diphosphate: step 7/9. The chain is Histidinol-phosphate aminotransferase 1 from Haemophilus influenzae (strain 86-028NP).